The sequence spans 287 residues: DegV domain-containing protein DR_0500 (287 aa).

A DegV domain is found at 7-280; it reads FAVVTDGGLD…PRALGVAAAP (274 aa). The hexadecanoate site is built by serine 62 and serine 93.

Functionally, may bind long-chain fatty acids, such as palmitate, and may play a role in lipid transport or fatty acid metabolism. The protein is DegV domain-containing protein DR_0500 of Deinococcus radiodurans (strain ATCC 13939 / DSM 20539 / JCM 16871 / CCUG 27074 / LMG 4051 / NBRC 15346 / NCIMB 9279 / VKM B-1422 / R1).